The primary structure comprises 138 residues: Small ribosomal subunit protein uS11 (138 aa).

Over residues 1–12 (MPPAKKAAAAPK) the composition is skewed to low complexity. Residues 1–27 (MPPAKKAAAAPKKGQKTRRREKKNVPH) form a disordered region. Basic residues predominate over residues 13–22 (KGQKTRRREK).

It belongs to the universal ribosomal protein uS11 family. As to quaternary structure, part of the 30S ribosomal subunit. Interacts with proteins S7 and S18. Binds to IF-3.

Located on the platform of the 30S subunit, it bridges several disparate RNA helices of the 16S rRNA. Forms part of the Shine-Dalgarno cleft in the 70S ribosome. This is Small ribosomal subunit protein uS11 from Mycolicibacterium paratuberculosis (strain ATCC BAA-968 / K-10) (Mycobacterium paratuberculosis).